Here is a 421-residue protein sequence, read N- to C-terminus: L-Ala-D/L-amino acid epimerase (421 aa).

Substrate-binding positions include Thr193 and 218-220; that span reads KLK. 3 residues coordinate Mg(2+): Asp247, Glu275, and Asp304. Residues Lys328 and 380–382 contribute to the substrate site; that span reads DLD.

It belongs to the mandelate racemase/muconate lactonizing enzyme family. Mg(2+) serves as cofactor.

Its function is as follows. Catalyzes the epimerization of various hydrophobic and polar dipeptides. Has epimerase activity with L-Ala-L-Ala, L-Ala-L-Ser, L-Ala-L-Thr and L-Ala-L-Trp (in vitro). This chain is L-Ala-D/L-amino acid epimerase, found in Populus trichocarpa (Western balsam poplar).